The chain runs to 628 residues: Neutral/alkaline invertase 1, mitochondrial (628 aa).

A mitochondrion-targeting transit peptide spans 1 to 35; sequence MAAAAISHLRRGAPRHARALLYLSTRRFSSSSAAG. Residues 79–90 show a composition bias toward low complexity; that stretch reads ASSAPPLESPPI. Residues 79–113 form a disordered region; the sequence is ASSAPPLESPPIEELPDDATPPPEEEPGLPAPEKD.

The protein belongs to the glycosyl hydrolase 100 family. Expressed in roots, leaf and stems.

It is found in the mitochondrion. The catalysed reaction is Hydrolysis of terminal non-reducing beta-D-fructofuranoside residues in beta-D-fructofuranosides.. Its function is as follows. Mitochondrial invertase that cleaves sucrose into glucose and fructose. The protein is Neutral/alkaline invertase 1, mitochondrial of Oryza sativa subsp. japonica (Rice).